The primary structure comprises 298 residues: N-acetylmuramic acid 6-phosphate etherase (298 aa).

An SIS domain is found at 55-218 (IHAQVSGGGR…STGLMIKSGK (164 aa)). Glutamate 83 (proton donor) is an active-site residue. Residue glutamate 114 is part of the active site.

This sequence belongs to the GCKR-like family. MurNAc-6-P etherase subfamily. In terms of assembly, homodimer.

The enzyme catalyses N-acetyl-D-muramate 6-phosphate + H2O = N-acetyl-D-glucosamine 6-phosphate + (R)-lactate. The protein operates within amino-sugar metabolism; 1,6-anhydro-N-acetylmuramate degradation. It participates in amino-sugar metabolism; N-acetylmuramate degradation. Its pathway is cell wall biogenesis; peptidoglycan recycling. In terms of biological role, specifically catalyzes the cleavage of the D-lactyl ether substituent of MurNAc 6-phosphate, producing GlcNAc 6-phosphate and D-lactate. Together with AnmK, is also required for the utilization of anhydro-N-acetylmuramic acid (anhMurNAc) either imported from the medium or derived from its own cell wall murein, and thus plays a role in cell wall recycling. In Shigella flexneri serotype 5b (strain 8401), this protein is N-acetylmuramic acid 6-phosphate etherase.